The following is a 486-amino-acid chain: Aspartyl/glutamyl-tRNA(Asn/Gln) amidotransferase subunit B (486 aa).

This sequence belongs to the GatB/GatE family. GatB subfamily. Heterotrimer of A, B and C subunits.

It carries out the reaction L-glutamyl-tRNA(Gln) + L-glutamine + ATP + H2O = L-glutaminyl-tRNA(Gln) + L-glutamate + ADP + phosphate + H(+). The enzyme catalyses L-aspartyl-tRNA(Asn) + L-glutamine + ATP + H2O = L-asparaginyl-tRNA(Asn) + L-glutamate + ADP + phosphate + 2 H(+). Its function is as follows. Allows the formation of correctly charged Asn-tRNA(Asn) or Gln-tRNA(Gln) through the transamidation of misacylated Asp-tRNA(Asn) or Glu-tRNA(Gln) in organisms which lack either or both of asparaginyl-tRNA or glutaminyl-tRNA synthetases. The reaction takes place in the presence of glutamine and ATP through an activated phospho-Asp-tRNA(Asn) or phospho-Glu-tRNA(Gln). This is Aspartyl/glutamyl-tRNA(Asn/Gln) amidotransferase subunit B from Orientia tsutsugamushi (strain Boryong) (Rickettsia tsutsugamushi).